A 340-amino-acid polypeptide reads, in one-letter code: Adenine deaminase (340 aa).

Positions 17, 19, and 197 each coordinate Zn(2+). Residue E200 is the Proton donor of the active site. Position 278 (D278) interacts with Zn(2+). Residue D279 participates in substrate binding.

Belongs to the metallo-dependent hydrolases superfamily. Adenosine and AMP deaminases family. Adenine deaminase type 2 subfamily. It depends on Zn(2+) as a cofactor.

The catalysed reaction is adenine + H2O + H(+) = hypoxanthine + NH4(+). Catalyzes the hydrolytic deamination of adenine to hypoxanthine. Plays an important role in the purine salvage pathway and in nitrogen catabolism. The protein is Adenine deaminase of Streptomyces coelicolor (strain ATCC BAA-471 / A3(2) / M145).